We begin with the raw amino-acid sequence, 164 residues long: Ribosome-binding factor A (164 aa).

The protein belongs to the RbfA family. Monomer. Binds 30S ribosomal subunits, but not 50S ribosomal subunits or 70S ribosomes.

The protein resides in the cytoplasm. One of several proteins that assist in the late maturation steps of the functional core of the 30S ribosomal subunit. Associates with free 30S ribosomal subunits (but not with 30S subunits that are part of 70S ribosomes or polysomes). Required for efficient processing of 16S rRNA. May interact with the 5'-terminal helix region of 16S rRNA. The chain is Ribosome-binding factor A from Mycobacterium leprae (strain Br4923).